Reading from the N-terminus, the 547-residue chain is Chaperonin GroEL (547 aa).

ATP contacts are provided by residues 30–33 (TLGP), lysine 51, 87–91 (DGTTT), glycine 415, and aspartate 496.

It belongs to the chaperonin (HSP60) family. As to quaternary structure, forms a cylinder of 14 subunits composed of two heptameric rings stacked back-to-back. Interacts with the co-chaperonin GroES.

The protein resides in the cytoplasm. It carries out the reaction ATP + H2O + a folded polypeptide = ADP + phosphate + an unfolded polypeptide.. Functionally, together with its co-chaperonin GroES, plays an essential role in assisting protein folding. The GroEL-GroES system forms a nano-cage that allows encapsulation of the non-native substrate proteins and provides a physical environment optimized to promote and accelerate protein folding. This Chlorobium limicola (strain DSM 245 / NBRC 103803 / 6330) protein is Chaperonin GroEL.